We begin with the raw amino-acid sequence, 795 residues long: Protocadherin beta-5 (795 aa).

The N-terminal stretch at 1–30 (METALAKTPQKRQVMFLAILLLLWEAGSEA) is a signal peptide. At 31–689 (VRYSIPEETE…AQADSLTVYL (659 aa)) the chain is on the extracellular side. Cadherin domains are found at residues 35 to 133 (IPEE…APEF), 138 to 242 (MLLK…APEF), 247 to 346 (YEVQ…APEL), 351 to 450 (LSSP…APAF), and 455 to 560 (YTLF…SPFV). An N-linked (GlcNAc...) asparagine glycan is attached at Asn169. Lys296 is subject to N6-acetyllysine. 2 N-linked (GlcNAc...) asparagine glycosylation sites follow: Asn417 and Asn435. A glycan (N-linked (GlcNAc...) asparagine) is linked at Asn566. In terms of domain architecture, Cadherin 6 spans 567-670 (GSAPCTELVP…LVDGFSQPYL (104 aa)). A helical membrane pass occupies residues 690–710 (VVALASVSSLFLFSVLLFVAV). Topologically, residues 711–795 (RLCRRSRAAP…AAFRNSFGLN (85 aa)) are cytoplasmic.

The protein localises to the cell membrane. Functionally, potential calcium-dependent cell-adhesion protein. May be involved in the establishment and maintenance of specific neuronal connections in the brain. This chain is Protocadherin beta-5 (PCDHB5), found in Homo sapiens (Human).